The primary structure comprises 170 residues: Photosystem II extrinsic protein V (170 aa).

A signal peptide spans 1–33 (MASFFSTLRRSLNRLLIALPVLLGLMISTPAQA). Positions 70, 73, 74, and 125 each coordinate heme c.

Belongs to the cytochrome c family. PsbV subfamily. In terms of assembly, PSII is composed of 1 copy each of membrane proteins PsbA, PsbB, PsbC, PsbD, PsbE, PsbF, PsbH, PsbI, PsbJ, PsbK, PsbL, PsbM, PsbT, PsbX, PsbY, PsbZ, Psb30/Ycf12, peripheral proteins PsbO, CyanoQ (PsbQ), PsbU, PsbV and a large number of cofactors. It forms dimeric complexes. Requires heme c as cofactor.

Its subcellular location is the cellular thylakoid membrane. One of the extrinsic, lumenal subunits of photosystem II (PSII). PSII is a light-driven water plastoquinone oxidoreductase, using light energy to abstract electrons from H(2)O, generating a proton gradient subsequently used for ATP formation. The extrinsic proteins stabilize the structure of photosystem II oxygen-evolving complex (OEC), the ion environment of oxygen evolution and protect the OEC against heat-induced inactivation. Low-potential cytochrome c that plays a role in the OEC of PSII. In Synechococcus sp. (strain CC9311), this protein is Photosystem II extrinsic protein V.